The primary structure comprises 115 residues: NADH-ubiquinone oxidoreductase chain 3 (115 aa).

Residue M1 is modified to N-formylmethionine. 3 helical membrane-spanning segments follow: residues 3–23 (LMLALLTNFTLATLLVIIAFW), 55–75 (FFLVAITFLLFDLEIALLLPL), and 84–104 (LNTMLTMALFLIILLAVSLAY).

As to quaternary structure, core subunit of respiratory chain NADH dehydrogenase (Complex I) which is composed of 45 different subunits. Interacts with TMEM186. Interacts with TMEM242.

Its subcellular location is the mitochondrion inner membrane. It carries out the reaction a ubiquinone + NADH + 5 H(+)(in) = a ubiquinol + NAD(+) + 4 H(+)(out). Functionally, core subunit of the mitochondrial membrane respiratory chain NADH dehydrogenase (Complex I) which catalyzes electron transfer from NADH through the respiratory chain, using ubiquinone as an electron acceptor. Essential for the catalytic activity of complex I. This chain is NADH-ubiquinone oxidoreductase chain 3, found in Bos taurus (Bovine).